A 194-amino-acid chain; its full sequence is Translationally-controlled tumor protein homolog 2 (194 aa).

The 194-residue stretch at 1–194 folds into the TCTP domain; it reads MKLYKDLIGN…IKYGLLQVDV (194 aa).

The protein belongs to the TCTP family.

Its subcellular location is the cytoplasm. Functionally, involved in calcium binding and microtubule stabilization. The sequence is that of Translationally-controlled tumor protein homolog 2 from Dictyostelium discoideum (Social amoeba).